We begin with the raw amino-acid sequence, 134 residues long: NADPH-dependent 7-cyano-7-deazaguanine reductase (134 aa).

C48 serves as the catalytic Thioimide intermediate. Residue D55 is the Proton donor of the active site. Substrate-binding positions include V70–L72 and Q89–E90.

It belongs to the GTP cyclohydrolase I family. QueF type 1 subfamily.

It is found in the cytoplasm. It carries out the reaction 7-aminomethyl-7-carbaguanine + 2 NADP(+) = 7-cyano-7-deazaguanine + 2 NADPH + 3 H(+). It functions in the pathway tRNA modification; tRNA-queuosine biosynthesis. Functionally, catalyzes the NADPH-dependent reduction of 7-cyano-7-deazaguanine (preQ0) to 7-aminomethyl-7-deazaguanine (preQ1). The chain is NADPH-dependent 7-cyano-7-deazaguanine reductase from Caldanaerobacter subterraneus subsp. tengcongensis (strain DSM 15242 / JCM 11007 / NBRC 100824 / MB4) (Thermoanaerobacter tengcongensis).